The primary structure comprises 190 residues: Cytoglobin (190 aa).

Residues 1 to 21 (MEKVPGDMEIERRERSEELSE) form a disordered region. In terms of domain architecture, Globin spans 18–167 (ELSEAERKAV…IYSHVTAAYK (150 aa)). Cysteines 38 and 83 form a disulfide. Heme b-binding residues include His-81 and His-113.

The protein belongs to the globin family. As to quaternary structure, monomeric. Homodimer; disulfide-linked in vitro. Also homooligomeric in vitro. Post-translationally, the formation of an intramolecular disulfide bond between cysteines Cys-38 and Cys-83 specifically enhances the nitrite reductase activity. As to expression, expressed in brain and retina by non-neuronal cells (at protein level). This is the major globin expressed in vascular smooth muscle and is not present in the endothelium (at protein level).

The protein resides in the cytoplasm. Its subcellular location is the nucleus. The catalysed reaction is Fe(II)-heme b-[protein] + nitric oxide + O2 = Fe(III)-heme b-[protein] + nitrate. It catalyses the reaction 2 superoxide + 2 H(+) = H2O2 + O2. It carries out the reaction Fe(III)-heme b-[protein] + nitric oxide + H2O = Fe(II)-heme b-[protein] + nitrite + 2 H(+). The enzyme catalyses H2O2 + AH2 = A + 2 H2O. The nitric oxide dioxygenase activity is activated by a reducing system composed of cytochrome b5, its upstream reductase CYB5R3 and NADH. Functionally, probable multifunctional globin with a hexacoordinated heme iron required for the catalysis of various reactions depending on redox condition of the cell as well as oxygen availability. Has a nitric oxide dioxygenase (NOD) activity and is most probably involved in cell-mediated and oxygen-dependent nitric oxide consumption. By scavenging this second messenger may regulate several biological processes including endothelium-mediated vasodilation and vascular tone. Under normoxic conditions functions as a nitric oxide dioxygenase (NOD) but under hypoxic conditions the globin may switch its function to that of a nitrite (NO2) reductase (NiR), generating nitric oxide. Could also have peroxidase and superoxide dismutase activities, detoxifying reactive oxygen species and protecting cells against oxidative stress. Also binds dioxygen with low affinity and could function as an oxygen sensor but has probably no function as a respiratory oxygen carrier. In Mus musculus (Mouse), this protein is Cytoglobin.